We begin with the raw amino-acid sequence, 199 residues long: Pneumococcal vaccine antigen A homolog (199 aa).

It is found in the cell surface. This is Pneumococcal vaccine antigen A homolog (pvaA) from Streptococcus pyogenes serotype M6 (strain ATCC BAA-946 / MGAS10394).